We begin with the raw amino-acid sequence, 251 residues long: UDP-Glc:alpha-D-GlcNAc-diphosphoundecaprenol beta-1,3-glucosyltransferase WfaP (251 aa).

The protein belongs to the glycosyltransferase 2 family. It depends on Mn(2+) as a cofactor. Mg(2+) serves as cofactor.

Its subcellular location is the cell inner membrane. It catalyses the reaction N-acetyl-alpha-D-glucosaminyl-di-trans,octa-cis-undecaprenyl diphosphate + UDP-alpha-D-glucose = beta-D-Glc-(1-&gt;3)-alpha-D-GlcNAc-di-trans,octa-cis-undecaprenyl diphosphate + UDP + H(+). It participates in bacterial outer membrane biogenesis; lipopolysaccharide biosynthesis. Its function is as follows. Catalyzes the addition of Glc, the second sugar moiety of the O56-antigen repeating unit, to GlcNAc-pyrophosphate-undecaprenol. The polypeptide is UDP-Glc:alpha-D-GlcNAc-diphosphoundecaprenol beta-1,3-glucosyltransferase WfaP (wfaP) (Escherichia coli).